The chain runs to 323 residues: Aquaporin NIP3-1 (323 aa).

Met-1 carries the N-acetylmethionine modification. 2 consecutive transmembrane segments (helical) span residues 45 to 65 (LIGEFVGTFTMIFAGCSAIVV) and 73 to 93 (VTLPGIALVWGLVVTVMIYSI). The short motif at 102–104 (NPA) is the NPA 1 element. 3 helical membrane-spanning segments follow: residues 122 to 142 (GYIAAQLLGSTLAAAVLRLVF), 167 to 187 (TSFVMEFIATFNLMFVISAVA), and 196 to 216 (FAGIAIGATIVLDILFSGPIS). The short motif at 221 to 223 (NPA) is the NPA 2 element. Residues 239 to 259 (WLYIVSPVIGALSGAWTYGLL) form a helical membrane-spanning segment.

The protein belongs to the MIP/aquaporin (TC 1.A.8) family. NIP (TC 1.A.8.12) subfamily.

It localises to the membrane. Its function is as follows. Aquaporins facilitate the transport of water and small neutral solutes across cell membranes. In Arabidopsis thaliana (Mouse-ear cress), this protein is Aquaporin NIP3-1 (NIP3-1).